Here is a 161-residue protein sequence, read N- to C-terminus: Small ribosomal subunit protein uS9 (161 aa).

Positions 1 to 21 (MATLQSLADLNRANTQTSNPE) are enriched in polar residues. Residues 1–25 (MATLQSLADLNRANTQTSNPENEAP) are disordered.

Belongs to the universal ribosomal protein uS9 family.

The sequence is that of Small ribosomal subunit protein uS9 from Methylorubrum extorquens (strain CM4 / NCIMB 13688) (Methylobacterium extorquens).